Reading from the N-terminus, the 484-residue chain is tRNA sulfurtransferase (484 aa).

Residues 63–167 (EAFAERLACI…NDNLYLIDKR (105 aa)) form the THUMP domain. ATP contacts are provided by residues 185–186 (LI), Lys-267, Gly-289, and Gln-298. A disulfide bridge links Cys-346 with Cys-458. Residues 406–484 (ISAGEIIIDV…GYNNVKVYRP (79 aa)) form the Rhodanese domain. Cys-458 serves as the catalytic Cysteine persulfide intermediate.

It belongs to the ThiI family.

The protein resides in the cytoplasm. The enzyme catalyses [ThiI sulfur-carrier protein]-S-sulfanyl-L-cysteine + a uridine in tRNA + 2 reduced [2Fe-2S]-[ferredoxin] + ATP + H(+) = [ThiI sulfur-carrier protein]-L-cysteine + a 4-thiouridine in tRNA + 2 oxidized [2Fe-2S]-[ferredoxin] + AMP + diphosphate. The catalysed reaction is [ThiS sulfur-carrier protein]-C-terminal Gly-Gly-AMP + S-sulfanyl-L-cysteinyl-[cysteine desulfurase] + AH2 = [ThiS sulfur-carrier protein]-C-terminal-Gly-aminoethanethioate + L-cysteinyl-[cysteine desulfurase] + A + AMP + 2 H(+). It participates in cofactor biosynthesis; thiamine diphosphate biosynthesis. Catalyzes the ATP-dependent transfer of a sulfur to tRNA to produce 4-thiouridine in position 8 of tRNAs, which functions as a near-UV photosensor. Also catalyzes the transfer of sulfur to the sulfur carrier protein ThiS, forming ThiS-thiocarboxylate. This is a step in the synthesis of thiazole, in the thiamine biosynthesis pathway. The sulfur is donated as persulfide by IscS. This chain is tRNA sulfurtransferase, found in Shewanella pealeana (strain ATCC 700345 / ANG-SQ1).